The following is a 208-amino-acid chain: GATA transcription factor 20 (208 aa).

A GATA-type zinc finger spans residues 94-119 (CASCDTTSTPLWRNGPKGPKSLCNAC).

Belongs to the type IV zinc-finger family. Class B subfamily.

Its subcellular location is the nucleus. Transcriptional regulator that specifically binds 5'-GATA-3' or 5'-GAT-3' motifs within gene promoters. This Arabidopsis thaliana (Mouse-ear cress) protein is GATA transcription factor 20.